Here is a 360-residue protein sequence, read N- to C-terminus: Protein phosphatase 1L (360 aa).

At 1–25 the chain is on the extracellular side; that stretch reads MIEDTMTLLSLLGRIMRYFLLRPET. The chain crosses the membrane as a helical span at residues 26–42; the sequence is LFLLCISLALWSYFFHT. Topologically, residues 43–360 are cytoplasmic; it reads DEVKTIVKSS…FRNSSKTEEQ (318 aa). Residues 92 to 351 form the PPM-type phosphatase domain; it reads NVAVYSIQGR…DNITVMVVKF (260 aa). Mn(2+) contacts are provided by Asp-128, Gly-129, Asp-302, and Asp-342.

This sequence belongs to the PP2C family. As to quaternary structure, interacts with MAP3K7/TAK1 and MAP3K5. Mg(2+) is required as a cofactor. Mn(2+) serves as cofactor.

It localises to the membrane. The catalysed reaction is O-phospho-L-seryl-[protein] + H2O = L-seryl-[protein] + phosphate. It catalyses the reaction O-phospho-L-threonyl-[protein] + H2O = L-threonyl-[protein] + phosphate. Its function is as follows. Acts as a suppressor of the SAPK signaling pathways by associating with and dephosphorylating MAP3K7/TAK1 and MAP3K5, and by attenuating the association between MAP3K7/TAK1 and MAP2K4 or MAP2K6. This Bos taurus (Bovine) protein is Protein phosphatase 1L (PPM1L).